The following is a 222-amino-acid chain: Charged multivesicular body protein 4a (222 aa).

Disordered regions lie at residues 1 to 21 and 177 to 222; these read MSGL…TPEE and LLHV…EWVS. Residues 1-116 are interaction with phosphoinosides; that stretch reads MSGLGRLFGR…ELAAQGLKKA (116 aa). Positions 1-150 are intramolecular interaction with C-terminus; sequence MSGLGRLFGR…QISDAISRPV (150 aa). Coiled coils occupy residues 20 to 105 and 155 to 180; these read EEAI…VLRT and DVDE…LLHV. The interval 151 to 222 is intramolecular interaction with N-terminus; sequence GFGDDVDEDE…ELKQLAEWVS (72 aa). Serine 196 carries the post-translational modification Phosphoserine.

It belongs to the SNF7 family. In terms of assembly, probable core component of the endosomal sorting required for transport complex III (ESCRT-III). ESCRT-III components are thought to multimerize to form a flat lattice on the perimeter membrane of the endosome. Several assembly forms of ESCRT-III may exist that interact and act sequentially. Self-associates; overexpression leads to the assembly of filaments that curve and associate to create circular rings. Interacts with CHMP2A. Interacts with CHMP3; the interaction requires the release of CHMP4A autoinhibition. Interacts with CHMP4B. Interacts with CHMP4C. Interacts with CHMP6. Interacts with VPS4A. Interacts with PDCD6IP; the interaction is direct.

Its subcellular location is the cytoplasmic vesicle membrane. It localises to the late endosome membrane. Its function is as follows. Probable core component of the endosomal sorting required for transport complex III (ESCRT-III) which is involved in multivesicular bodies (MVBs) formation and sorting of endosomal cargo proteins into MVBs. MVBs contain intraluminal vesicles (ILVs) that are generated by invagination and scission from the limiting membrane of the endosome and mostly are delivered to lysosomes enabling degradation of membrane proteins, such as stimulated growth factor receptors, lysosomal enzymes and lipids. The MVB pathway appears to require the sequential function of ESCRT-O, -I,-II and -III complexes. ESCRT-III proteins mostly dissociate from the invaginating membrane before the ILV is released. The ESCRT machinery also functions in topologically equivalent membrane fission events, such as the terminal stages of cytokinesis and the budding of enveloped viruses (lentiviruses). ESCRT-III proteins are believed to mediate the necessary vesicle extrusion and/or membrane fission activities, possibly in conjunction with the AAA ATPase VPS4. When overexpressed, membrane-assembled circular arrays of CHMP4A filaments can promote or stabilize negative curvature and outward budding. CHMP4A/B/C are required for the exosomal release of SDCBP, CD63 and syndecan. The chain is Charged multivesicular body protein 4a (CHMP4A) from Bos taurus (Bovine).